The following is a 118-amino-acid chain: Fluoride-specific ion channel FluC 2 (118 aa).

4 helical membrane passes run 1–21, 33–53, 55–75, and 93–113; these read MIEA…RFAI, FPIA…YIIG, GVTT…FTTF, and TFLL…FLGM. Gly70 and Thr73 together coordinate Na(+).

The protein belongs to the fluoride channel Fluc/FEX (TC 1.A.43) family.

It is found in the cell membrane. The catalysed reaction is fluoride(in) = fluoride(out). Its activity is regulated as follows. Na(+) is not transported, but it plays an essential structural role and its presence is essential for fluoride channel function. Its function is as follows. Fluoride-specific ion channel. Important for reducing fluoride concentration in the cell, thus reducing its toxicity. The polypeptide is Fluoride-specific ion channel FluC 2 (Bacillus thuringiensis subsp. konkukian (strain 97-27)).